A 266-amino-acid chain; its full sequence is 22 kDa alpha-zein 8 (266 aa).

The N-terminal stretch at 1-21 (MATKILALLALLALFVSATNA) is a signal peptide.

Belongs to the zein family.

Functionally, zeins are major seed storage proteins. The chain is 22 kDa alpha-zein 8 from Zea mays (Maize).